Here is a 341-residue protein sequence, read N- to C-terminus: MATNIAINGMGRIGRMVLRIALNNKNLNVKAINASYPPETIAHLLNYDTTHGVYDKKVEPIESGIKVNGHEIKLLSDRNPENLPWNEMDIDVVIEATGKFNHGDKAVAHINAGAKKVLLTGPSKGGDVQMIVKGVNDNQLDIDTYDIFSNASCTTNCIGPVAKVLNDKFGIINGLMTTVHAITNDQKNIDNPHKDLRRARSCNESIIPTSTGAAKALKEVLPEVEGKLHGMALRVPTKNVSLVDLVVDLEQNVTVTQVNDAFKNADLSGVLDVEEAPLVSVDFNTNPHSAIIDSQSTMVMGQNKVKVIAWYDNEWGYSNRVVEVAVKIGQLIDDKAMVKAI.

NAD(+) is bound by residues 12–13 (RI), arginine 78, and threonine 120. D-glyceraldehyde 3-phosphate is bound by residues 152-154 (SCT) and threonine 183. The Nucleophile role is filled by cysteine 153. Residue asparagine 184 participates in NAD(+) binding. Residues arginine 198, 211-212 (TG), and arginine 234 each bind D-glyceraldehyde 3-phosphate. Asparagine 313 is an NAD(+) binding site.

This sequence belongs to the glyceraldehyde-3-phosphate dehydrogenase family. As to quaternary structure, homotetramer.

The protein resides in the cytoplasm. It carries out the reaction D-glyceraldehyde 3-phosphate + phosphate + NAD(+) = (2R)-3-phospho-glyceroyl phosphate + NADH + H(+). It participates in carbohydrate degradation; glycolysis; pyruvate from D-glyceraldehyde 3-phosphate: step 1/5. Its function is as follows. Catalyzes the oxidative phosphorylation of glyceraldehyde 3-phosphate (G3P) to 1,3-bisphosphoglycerate (BPG) using the cofactor NAD. The first reaction step involves the formation of a hemiacetal intermediate between G3P and a cysteine residue, and this hemiacetal intermediate is then oxidized to a thioester, with concomitant reduction of NAD to NADH. The reduced NADH is then exchanged with the second NAD, and the thioester is attacked by a nucleophilic inorganic phosphate to produce BPG. The polypeptide is Glyceraldehyde-3-phosphate dehydrogenase 2 (gapA2) (Staphylococcus epidermidis (strain ATCC 12228 / FDA PCI 1200)).